Consider the following 168-residue polypeptide: ADP-ribosylation factor-like protein 2-binding protein (168 aa).

This sequence belongs to the ARL2BP family.

It is found in the cytoplasm. Its subcellular location is the mitochondrion intermembrane space. It localises to the cytoskeleton. The protein resides in the microtubule organizing center. The protein localises to the centrosome. It is found in the nucleus. Its subcellular location is the spindle. It localises to the cilium basal body. In terms of biological role, plays a role as an effector of the ADP-ribosylation factor-like protein 2, ARL2. This Danio rerio (Zebrafish) protein is ADP-ribosylation factor-like protein 2-binding protein (arl2bp).